Here is a 249-residue protein sequence, read N- to C-terminus: Putative NAD(+)--arginine ADP-ribosyltransferase Vis (249 aa).

The N-terminal stretch at 1–18 (MNTRFLLLLCCLSFTTFS) is a signal peptide. Residues 31–223 (EEEVTQLAED…IGVETVKASA (193 aa)) enclose the TR mART core domain. NAD(+) is bound by residues 68–80 (SISG…DYLR), 117–120 (RGTW), and Glu-137. The active site involves Arg-117. Active-site residues include Ser-142 and Glu-191. Residue Glu-191 coordinates NAD(+).

It belongs to the Arg-specific ADP-ribosyltransferase family.

It localises to the secreted. The enzyme catalyses L-arginyl-[protein] + NAD(+) = N(omega)-(ADP-D-ribosyl)-L-arginyl-[protein] + nicotinamide + H(+). Its function is as follows. A probable mono(ADP-ribosyl)transferase, it may ADP-ribosylate Arg in target protein(s). Upon expression in yeast cells causes cell death. The sequence is that of Putative NAD(+)--arginine ADP-ribosyltransferase Vis from Vibrio splendidus (strain 12B01).